A 923-amino-acid chain; its full sequence is Isoleucine--tRNA ligase (923 aa).

Residues 57-67 (PYANGDIHMGH) carry the 'HIGH' region motif. Glu553 contributes to the L-isoleucyl-5'-AMP binding site. The 'KMSKS' region motif lies at 594-598 (KMSKS). Position 597 (Lys597) interacts with ATP. Zn(2+) contacts are provided by Cys888, Cys891, Cys908, and Cys911.

This sequence belongs to the class-I aminoacyl-tRNA synthetase family. IleS type 1 subfamily. Monomer. It depends on Zn(2+) as a cofactor.

The protein resides in the cytoplasm. It carries out the reaction tRNA(Ile) + L-isoleucine + ATP = L-isoleucyl-tRNA(Ile) + AMP + diphosphate. Catalyzes the attachment of isoleucine to tRNA(Ile). As IleRS can inadvertently accommodate and process structurally similar amino acids such as valine, to avoid such errors it has two additional distinct tRNA(Ile)-dependent editing activities. One activity is designated as 'pretransfer' editing and involves the hydrolysis of activated Val-AMP. The other activity is designated 'posttransfer' editing and involves deacylation of mischarged Val-tRNA(Ile). This chain is Isoleucine--tRNA ligase, found in Shouchella clausii (strain KSM-K16) (Alkalihalobacillus clausii).